The chain runs to 222 residues: uncharacterized protein (222 aa).

Belongs to the PhoU family.

The protein resides in the cytoplasm. Not known; probably involved in phosphate transport and/or metabolism. This is an uncharacterized protein from Deinococcus radiodurans (strain ATCC 13939 / DSM 20539 / JCM 16871 / CCUG 27074 / LMG 4051 / NBRC 15346 / NCIMB 9279 / VKM B-1422 / R1).